The sequence spans 306 residues: Acetaldehyde dehydrogenase (306 aa).

Cys-131 functions as the Acyl-thioester intermediate in the catalytic mechanism. NAD(+) contacts are provided by residues 162–170 and Asn-273; that span reads SAGPGTRKN.

This sequence belongs to the acetaldehyde dehydrogenase family.

It catalyses the reaction acetaldehyde + NAD(+) + CoA = acetyl-CoA + NADH + H(+). This Albidiferax ferrireducens (strain ATCC BAA-621 / DSM 15236 / T118) (Rhodoferax ferrireducens) protein is Acetaldehyde dehydrogenase.